The sequence spans 220 residues: Riboflavin kinase (220 aa).

An H-T-H motif-like region spans residues 1 to 92 (METDDQYYRA…LSRILAIKNN (92 aa)). The riboflavin kinase stretch occupies residues 93-220 (VVITGTVTSG…GDRVSVEVYT (128 aa)). 102–107 (GMGEGR) contacts CDP. The Mg(2+) site is built by Thr-131 and Asn-133. Residues Thr-188 and Glu-195 each coordinate FMN. Residue 200–203 (KYLR) coordinates CDP.

The protein belongs to the archaeal riboflavin kinase family. Mg(2+) is required as a cofactor.

The enzyme catalyses riboflavin + CTP = CDP + FMN + H(+). Its pathway is cofactor biosynthesis; FMN biosynthesis; FMN from riboflavin (CTP route): step 1/1. Catalyzes the CTP-dependent phosphorylation of riboflavin (vitamin B2) to form flavin mononucleotide (FMN). This chain is Riboflavin kinase (ribK), found in Thermoplasma acidophilum (strain ATCC 25905 / DSM 1728 / JCM 9062 / NBRC 15155 / AMRC-C165).